The chain runs to 172 residues: Myosin regulatory light chain (172 aa).

Threonine 17 carries the phosphothreonine modification. Serine 18 is modified (phosphoserine). 3 EF-hand domains span residues 27–62 (AQIQEFKEAFNMIDQNRDGFIDQEDLKDMFASLGKE), 98–133 (DPEEVIRNAFQCFDEDNSGKLNEEHLRELLTTMGER), and 134–168 (YSEEQVDELFRDAPIKGGQFDYVEFTRMLKHGTKD). Residues aspartate 40, asparagine 42, aspartate 44, and aspartate 51 each contribute to the Ca(2+) site.

As to quaternary structure, myosin is a hexamer of 2 heavy chains and 4 light chains (two regulatory light chains and two essential light chains). In terms of processing, may be phosphorylated by let-502 or/and pak-1 and dephosphorylated by mel-11 to regulate its activation and myosin II-mediated contraction. As to expression, expressed in the spermathecal and uterine walls. Weak expression in gonadal sheath and intestinal muscle. Not detected in vulval, pharyngeal or body wall muscles.

It localises to the cytoplasm. It is found in the cytoskeleton. In terms of biological role, regulates myosin II activity and organization during embryo elongation. May be involved in the organization of mlc-5 into bundles. Required maternally for cytokinesis during meiosis and mitosis in the early embryo and for the establishment of embryonic anterior-posterior polarity. This Caenorhabditis elegans protein is Myosin regulatory light chain.